Consider the following 109-residue polypeptide: MSQERLLSVLRAPHISEKATNNAEKSNTVVLKVALDANKAEIAAAVAQLFEVKVDSVRTVVVKGKTKRRGNKMGRRSDWKKAYVTLAKAKIWTSWTVQSNRRKLENGYR.

The protein belongs to the universal ribosomal protein uL23 family. In terms of assembly, part of the 50S ribosomal subunit. Contacts protein L29, and trigger factor when it is bound to the ribosome.

One of the early assembly proteins it binds 23S rRNA. One of the proteins that surrounds the polypeptide exit tunnel on the outside of the ribosome. Forms the main docking site for trigger factor binding to the ribosome. This is Large ribosomal subunit protein uL23 from Haemophilus influenzae (strain PittEE).